The primary structure comprises 333 residues: Fructose-1,6-bisphosphatase class 1 1 (333 aa).

Positions 81, 100, 102, and 103 each coordinate Mg(2+). Substrate contacts are provided by residues 103-106 (DGSS) and N191. A Mg(2+)-binding site is contributed by E263.

The protein belongs to the FBPase class 1 family. Homotetramer. Mg(2+) serves as cofactor.

It localises to the cytoplasm. It carries out the reaction beta-D-fructose 1,6-bisphosphate + H2O = beta-D-fructose 6-phosphate + phosphate. Its pathway is carbohydrate biosynthesis; Calvin cycle. The protein is Fructose-1,6-bisphosphatase class 1 1 of Cereibacter sphaeroides (strain ATCC 17025 / ATH 2.4.3) (Rhodobacter sphaeroides).